Here is a 523-residue protein sequence, read N- to C-terminus: Melanoma-associated antigen E2 (523 aa).

MAGE domains are found at residues 88–288 (LEDR…YNKA) and 311–502 (MNDK…YREA).

In Homo sapiens (Human), this protein is Melanoma-associated antigen E2 (MAGEE2).